We begin with the raw amino-acid sequence, 895 residues long: Zyg eleven-related protein 1 (895 aa).

Disordered regions lie at residues 58-78 (HGPAPVEHLGPPTDEPRPDQG) and 195-221 (RGQMERDGLRSPLSPSSQPSSIQSDHQ). Residues 205–220 (SPLSPSSQPSSIQSDH) are compositionally biased toward low complexity.

In terms of assembly, interacts with elc-1. Part of an E3 ubiquitin ligase complex including zer-11, cul-2 and elc-1.

In terms of biological role, acts as a target recruitment subunit in the E3 ubiquitin ligase complex zer-1-cul-2-elc-1. This Caenorhabditis elegans protein is Zyg eleven-related protein 1 (zer-1).